Here is a 399-residue protein sequence, read N- to C-terminus: Argininosuccinate synthase (399 aa).

9–17 (AYSGGLDTS) lines the ATP pocket. Tyr85 provides a ligand contact to L-citrulline. Gly115 is an ATP binding site. Residues Thr117, Asn121, and Asp122 each contribute to the L-aspartate site. Asn121 is an L-citrulline binding site. L-citrulline contacts are provided by Arg125, Ser173, Glu258, and Tyr270.

Belongs to the argininosuccinate synthase family. Type 1 subfamily. Homotetramer.

It localises to the cytoplasm. It catalyses the reaction L-citrulline + L-aspartate + ATP = 2-(N(omega)-L-arginino)succinate + AMP + diphosphate + H(+). Its pathway is amino-acid biosynthesis; L-arginine biosynthesis; L-arginine from L-ornithine and carbamoyl phosphate: step 2/3. This Streptococcus uberis (strain ATCC BAA-854 / 0140J) protein is Argininosuccinate synthase.